The chain runs to 796 residues: Nuclear GTPase SLIP-GC (796 aa).

The span at 1 to 22 (MAETKDVFGQEPHPVEDDLYKE) shows a compositional bias: basic and acidic residues. Residues 1-35 (MAETKDVFGQEPHPVEDDLYKERTRKRRKSDRDQR) are disordered. Position 107–114 (107–114 (GSTGAGKS)) interacts with GTP. Coiled-coil stretches lie at residues 158–185 (SDQE…EEAD) and 745–775 (KELA…RLRK).

In terms of tissue distribution, expressed in germinal center B-cell and in lymphomas derived from germinal center B-cell.

It is found in the nucleus speckle. Nuclear GTPase found in germinal center B-cells, where it may inhibit function of the activation-induced cytidine deaminase AICDA. Reduces somatic hypermutation in B-cells which may enhance genome stability. This Homo sapiens (Human) protein is Nuclear GTPase SLIP-GC (NUGGC).